Consider the following 162-residue polypeptide: Peroxiredoxin-2 (162 aa).

In terms of domain architecture, Thioredoxin spans 4–162 (IAVGDVLPDG…SSADDILKDL (159 aa)). The Cysteine sulfenic acid (-SOH) intermediate role is filled by C51.

It belongs to the peroxiredoxin family. Prx5 subfamily. Monomer. Homodimer. Glutathionylation of C(P) causes the dimer to dissociate. Subsequent reduction of the mixed disulfide bond leads again to dimerization.

The enzyme catalyses [glutaredoxin]-dithiol + a hydroperoxide = [glutaredoxin]-disulfide + an alcohol + H2O. In terms of biological role, thiol-specific peroxidase that catalyzes the reduction of hydrogen peroxide and organic hydroperoxides to water and alcohols, respectively. Can reduce H(2)O(2) and short chain organic, fatty acid, and phospholipid hydroperoxides. Plays a role in cell protection against oxidative stress by detoxifying peroxides. The sequence is that of Peroxiredoxin-2 from Populus trichocarpa (Western balsam poplar).